Consider the following 493-residue polypeptide: Bifunctional protein GlmU (493 aa).

A pyrophosphorylase region spans residues 1–246 (MTGELDVDGE…SWLVAGINDR (246 aa)). UDP-N-acetyl-alpha-D-glucosamine-binding positions include 21–24 (LAAG), K35, Q88, 93–94 (GT), 117–119 (SGD), G156, E171, N186, and N244. D119 is a Mg(2+) binding site. N244 provides a ligand contact to Mg(2+). A linker region spans residues 247–267 (VQLTAAATELNARIIRRWQLA). Residues 268–493 (GVTIHDPRTT…DGPADDASDA (226 aa)) form an N-acetyltransferase region. Residues R349 and K367 each coordinate UDP-N-acetyl-alpha-D-glucosamine. H379 serves as the catalytic Proton acceptor. 2 residues coordinate UDP-N-acetyl-alpha-D-glucosamine: Y382 and N393. Residues A396, 402–403 (NY), S421, and A439 each bind acetyl-CoA. A disordered region spans residues 470-493 (RPGTPEARAAVEAADGPADDASDA).

In the N-terminal section; belongs to the N-acetylglucosamine-1-phosphate uridyltransferase family. The protein in the C-terminal section; belongs to the transferase hexapeptide repeat family. In terms of assembly, homotrimer. The cofactor is Mg(2+).

It is found in the cytoplasm. It catalyses the reaction alpha-D-glucosamine 1-phosphate + acetyl-CoA = N-acetyl-alpha-D-glucosamine 1-phosphate + CoA + H(+). It carries out the reaction N-acetyl-alpha-D-glucosamine 1-phosphate + UTP + H(+) = UDP-N-acetyl-alpha-D-glucosamine + diphosphate. It functions in the pathway nucleotide-sugar biosynthesis; UDP-N-acetyl-alpha-D-glucosamine biosynthesis; N-acetyl-alpha-D-glucosamine 1-phosphate from alpha-D-glucosamine 6-phosphate (route II): step 2/2. It participates in nucleotide-sugar biosynthesis; UDP-N-acetyl-alpha-D-glucosamine biosynthesis; UDP-N-acetyl-alpha-D-glucosamine from N-acetyl-alpha-D-glucosamine 1-phosphate: step 1/1. The protein operates within bacterial outer membrane biogenesis; LPS lipid A biosynthesis. In terms of biological role, catalyzes the last two sequential reactions in the de novo biosynthetic pathway for UDP-N-acetylglucosamine (UDP-GlcNAc). The C-terminal domain catalyzes the transfer of acetyl group from acetyl coenzyme A to glucosamine-1-phosphate (GlcN-1-P) to produce N-acetylglucosamine-1-phosphate (GlcNAc-1-P), which is converted into UDP-GlcNAc by the transfer of uridine 5-monophosphate (from uridine 5-triphosphate), a reaction catalyzed by the N-terminal domain. This is Bifunctional protein GlmU from Clavibacter sepedonicus (Clavibacter michiganensis subsp. sepedonicus).